A 221-amino-acid polypeptide reads, in one-letter code: Germin-like protein 5-1 (221 aa).

An N-terminal signal peptide occupies residues 1 to 25; sequence MARPSLPCAVVAVLLLALLPTPSTA. Residues C35 and C50 are joined by a disulfide bond. Positions 62-210 constitute a Cupin type-1 domain; sequence KGLAAAGNTN…AFQVGTKEVE (149 aa). Residue N71 is glycosylated (N-linked (GlcNAc...) asparagine). 4 residues coordinate Mn(2+): H110, H112, E117, and H156.

The protein belongs to the germin family. As to quaternary structure, oligomer (believed to be a pentamer but probably hexamer).

The protein resides in the secreted. It localises to the extracellular space. Its subcellular location is the apoplast. Its function is as follows. May play a role in plant defense. Probably has no oxalate oxidase activity even if the active site is conserved. This chain is Germin-like protein 5-1, found in Oryza sativa subsp. japonica (Rice).